The chain runs to 127 residues: Thioredoxin domain-containing protein 8 (127 aa).

A Thioredoxin domain is found at 2-127 (VQKIKSMREF…KLEEKIQELM (126 aa)). Residues Cys-32 and Cys-35 are joined by a disulfide bond.

This sequence belongs to the thioredoxin family. Testis-specific. Expressed in spermatozoa, sperm tail, elongated and round spermatids.

It localises to the cytoplasm. The protein resides in the golgi apparatus. Functionally, may be required for post-translational modifications of proteins required for acrosomal biogenesis. May act by reducing disulfide bonds within the sperm. This chain is Thioredoxin domain-containing protein 8 (Txndc8), found in Rattus norvegicus (Rat).